The chain runs to 417 residues: 3-isopropylmalate dehydratase large subunit 2 (417 aa).

[4Fe-4S] cluster is bound by residues Cys298, Cys358, and Cys361.

Belongs to the aconitase/IPM isomerase family. LeuC type 2 subfamily. In terms of assembly, heterodimer of LeuC and LeuD. [4Fe-4S] cluster serves as cofactor.

It catalyses the reaction (2R,3S)-3-isopropylmalate = (2S)-2-isopropylmalate. The protein operates within amino-acid biosynthesis; L-leucine biosynthesis; L-leucine from 3-methyl-2-oxobutanoate: step 2/4. Its function is as follows. Catalyzes the isomerization between 2-isopropylmalate and 3-isopropylmalate, via the formation of 2-isopropylmaleate. The protein is 3-isopropylmalate dehydratase large subunit 2 of Thermotoga maritima (strain ATCC 43589 / DSM 3109 / JCM 10099 / NBRC 100826 / MSB8).